Consider the following 688-residue polypeptide: Potassium-transporting ATPase ATP-binding subunit (688 aa).

4 helical membrane passes run 35–55, 62–82, 219–239, and 260–280; these read VMFV…AMLA, ALFT…ANFA, IALT…CVTL, and VLIA…LSAI. Residue Asp313 is the 4-aspartylphosphate intermediate of the active site. Residues Asp350, Glu354, 383–390, and Lys401 contribute to the ATP site; that span reads FSAMTRMS. Asp524 and Asp528 together coordinate Mg(2+). A run of 3 helical transmembrane segments spans residues 594–614, 622–642, and 667–687; these read FAII…LNIM, AVLS…PLAL, and GLIA…LLIL.

Belongs to the cation transport ATPase (P-type) (TC 3.A.3) family. Type IA subfamily. As to quaternary structure, the system is composed of three essential subunits: KdpA, KdpB and KdpC.

It is found in the cell inner membrane. It carries out the reaction K(+)(out) + ATP + H2O = K(+)(in) + ADP + phosphate + H(+). Part of the high-affinity ATP-driven potassium transport (or Kdp) system, which catalyzes the hydrolysis of ATP coupled with the electrogenic transport of potassium into the cytoplasm. This subunit is responsible for energy coupling to the transport system and for the release of the potassium ions to the cytoplasm. This is Potassium-transporting ATPase ATP-binding subunit from Photorhabdus laumondii subsp. laumondii (strain DSM 15139 / CIP 105565 / TT01) (Photorhabdus luminescens subsp. laumondii).